The chain runs to 254 residues: Proteasome subunit alpha (254 aa).

The disordered stretch occupies residues 234-254 (EEMLPTPAATEDAPANGDAPS).

It belongs to the peptidase T1A family. The 20S proteasome core is composed of 14 alpha and 14 beta subunits that assemble into four stacked heptameric rings, resulting in a barrel-shaped structure. The two inner rings, each composed of seven catalytic beta subunits, are sandwiched by two outer rings, each composed of seven alpha subunits. The catalytic chamber with the active sites is on the inside of the barrel. Has a gated structure, the ends of the cylinder being occluded by the N-termini of the alpha-subunits. Is capped by the proteasome-associated ATPase, ARC.

The protein localises to the cytoplasm. It functions in the pathway protein degradation; proteasomal Pup-dependent pathway. Its activity is regulated as follows. The formation of the proteasomal ATPase ARC-20S proteasome complex, likely via the docking of the C-termini of ARC into the intersubunit pockets in the alpha-rings, may trigger opening of the gate for substrate entry. Interconversion between the open-gate and close-gate conformations leads to a dynamic regulation of the 20S proteasome proteolysis activity. Component of the proteasome core, a large protease complex with broad specificity involved in protein degradation. This is Proteasome subunit alpha from Rhodococcus erythropolis (strain PR4 / NBRC 100887).